We begin with the raw amino-acid sequence, 124 residues long: Fluoride-specific ion channel FluC (124 aa).

A run of 4 helical transmembrane segments spans residues 4 to 24 (LLLV…ISIF), 35 to 55 (FGTL…YALG), 60 to 80 (ISPE…TTFS), and 102 to 122 (VVLN…LVFS). G74 and T77 together coordinate Na(+).

Belongs to the fluoride channel Fluc/FEX (TC 1.A.43) family.

It localises to the cell inner membrane. The catalysed reaction is fluoride(in) = fluoride(out). Na(+) is not transported, but it plays an essential structural role and its presence is essential for fluoride channel function. Fluoride-specific ion channel. Important for reducing fluoride concentration in the cell, thus reducing its toxicity. In Shewanella sp. (strain ANA-3), this protein is Fluoride-specific ion channel FluC.